The following is a 361-amino-acid chain: Peptidyl-prolyl cis-trans isomerase CYP40 (361 aa).

One can recognise a PPIase cyclophilin-type domain in the interval 7-172 (FMDISIGGEL…QDVVIHDCGE (166 aa)). 2 TPR repeats span residues 212–245 (VDFV…LDIC) and 298–331 (VKAL…EPND).

This sequence belongs to the cyclophilin-type PPIase family. As to expression, expressed at low levels in seedlings, roots, shoots, leaves, stems, inflorescences, flowers and siliques, with highest levels dividing tissues.

Its subcellular location is the cytoplasm. It catalyses the reaction [protein]-peptidylproline (omega=180) = [protein]-peptidylproline (omega=0). Its activity is regulated as follows. Binds cyclosporin A (CsA). CsA mediates some of its effects via an inhibitory action on PPIase. Its function is as follows. PPIases accelerate the folding of proteins. It catalyzes the cis-trans isomerization of proline imidic peptide bonds in oligopeptides. Involved in promoting the expression of the juvenile phase of vegetative development, and, to a lower extent, in regulating the positioning of floral buds, floral morphogenesis and the expression of HSPs. Collaboratively with RBL and ULT1, influences floral meristem (FM) determinacy in an AGAMOUS and SUPERMAN-dependent manner, thus contributing to the floral developmental homeostasis. This chain is Peptidyl-prolyl cis-trans isomerase CYP40, found in Arabidopsis thaliana (Mouse-ear cress).